We begin with the raw amino-acid sequence, 342 residues long: Anthranilate phosphoribosyltransferase (342 aa).

5-phospho-alpha-D-ribose 1-diphosphate contacts are provided by residues glycine 80, 83–84, threonine 88, 90–93, 108–116, and serine 120; these read GD, NIST, and KHGNRAVSS. Glycine 80 contacts anthranilate. Mg(2+) is bound at residue serine 92. Asparagine 111 contacts anthranilate. Arginine 166 contributes to the anthranilate binding site. Residues aspartate 225 and glutamate 226 each contribute to the Mg(2+) site.

Belongs to the anthranilate phosphoribosyltransferase family. Homodimer. Requires Mg(2+) as cofactor.

The enzyme catalyses N-(5-phospho-beta-D-ribosyl)anthranilate + diphosphate = 5-phospho-alpha-D-ribose 1-diphosphate + anthranilate. It functions in the pathway amino-acid biosynthesis; L-tryptophan biosynthesis; L-tryptophan from chorismate: step 2/5. Catalyzes the transfer of the phosphoribosyl group of 5-phosphorylribose-1-pyrophosphate (PRPP) to anthranilate to yield N-(5'-phosphoribosyl)-anthranilate (PRA). This is Anthranilate phosphoribosyltransferase from Halalkalibacterium halodurans (strain ATCC BAA-125 / DSM 18197 / FERM 7344 / JCM 9153 / C-125) (Bacillus halodurans).